A 560-amino-acid chain; its full sequence is Bifunctional NAD(P)H-hydrate repair enzyme (560 aa).

The segment at 1–241 (MLSRLSERCT…WMTAPERMRV (241 aa)) is NAD(P)H-hydrate epimerase. Residues 29–235 (LRDAEPAAAA…SLGLEDWMTA (207 aa)) form the YjeF N-terminal domain. The NADPHX 1; for epimerase activity stretch occupies residues 77–81 (NNGGD). 2 residues coordinate K(+): asparagine 78 and aspartate 145. An NADPHX 1; for epimerase activity region spans residues 149–155 (GTGICGP). Positions 160 and 178 each coordinate (6S)-NADPHX. Serine 181 provides a ligand contact to K(+). The YjeF C-terminal domain maps to 249-547 (LDDVYEYFGI…HRVPLIVNAS (299 aa)). An ADP-dependent (S)-NAD(P)H-hydrate dehydratase region spans residues 249–560 (LDDVYEYFGI…PASRQRPSGQ (312 aa)). Glycine 351 provides a ligand contact to (6S)-NADPHX. Positions 417-423 (HPGEAAR) are NADPHX 2; for dehydratase activity. ADP contacts are provided by residues 454–458 (KGPGT) and 475–484 (NAGMASGGMG). Aspartate 485 contacts (6S)-NADPHX.

In the N-terminal section; belongs to the NnrE/AIBP family. This sequence in the C-terminal section; belongs to the NnrD/CARKD family. K(+) is required as a cofactor.

It carries out the reaction (6S)-NADHX + ADP = AMP + phosphate + NADH + H(+). It catalyses the reaction (6S)-NADPHX + ADP = AMP + phosphate + NADPH + H(+). The enzyme catalyses (6R)-NADHX = (6S)-NADHX. The catalysed reaction is (6R)-NADPHX = (6S)-NADPHX. In terms of biological role, bifunctional enzyme that catalyzes the epimerization of the S- and R-forms of NAD(P)HX and the dehydration of the S-form of NAD(P)HX at the expense of ADP, which is converted to AMP. This allows the repair of both epimers of NAD(P)HX, a damaged form of NAD(P)H that is a result of enzymatic or heat-dependent hydration. The polypeptide is Bifunctional NAD(P)H-hydrate repair enzyme (Leishmania major).